Here is a 500-residue protein sequence, read N- to C-terminus: MTIFDNYEVWFVIGSQHLYGAETLRQVTQHAEHVVNALNTEAKLPCKLVLKPLGTSPDEITAICRDANYDDRCAGLVVWLHTFSPAKMWINGLSILNKPLLQFHTQFNAALPWDSIDMDFMNLNQTAHGGREFGFIGARMRQQHAVVTGHWQDKEAHTRIGAWMRQAVSKQDTRQLKVCRFGDNMREVAVTDGDKVAAQIKFGFSVNTWAVGDLVQVVNSIGDGDISALIDEYESSYTLTPATQIHGDKRQNVREAARIELGMKRFLEQGGFHAFTTTFEDLHGLKQLPGLAVQRLMQQGYGFAGEGDWKTAALLRIMKVMSTGLQGGTSFMEDYTYHFEKGNDLVLGSHMLEVCPSIAVEEKPILDVQHLGIGGKEDPARLIFNTQTGPAIVASLIDLGDRYRLLVNCIDTVKTPHSLPKLPVANALWKAQPDLPTASEAWILAGGAHHTVFSHALDLNDMRQFAEIHDIEIAVIDNDTRLPAFKDALRWNEVYYGLKR.

Residues glutamate 306, glutamate 333, histidine 350, and histidine 450 each contribute to the Mn(2+) site.

The protein belongs to the arabinose isomerase family. Homohexamer. The cofactor is Mn(2+).

It catalyses the reaction beta-L-arabinopyranose = L-ribulose. Its pathway is carbohydrate degradation; L-arabinose degradation via L-ribulose; D-xylulose 5-phosphate from L-arabinose (bacterial route): step 1/3. Its function is as follows. Catalyzes the conversion of L-arabinose to L-ribulose. The sequence is that of L-arabinose isomerase from Salmonella paratyphi A (strain ATCC 9150 / SARB42).